We begin with the raw amino-acid sequence, 903 residues long: Valine--tRNA ligase (903 aa).

Polar residues predominate over residues 1–15; the sequence is MVCVTDQNNENPSQN. Residues 1–22 form a disordered region; the sequence is MVCVTDQNNENPSQNRADKLPK. Positions 61–71 match the 'HIGH' region motif; sequence PNVTGQLHMGH. The 'KMSKS' region signature appears at 552-556; sequence KMSKS. Residue Lys555 participates in ATP binding. Residues 836 to 902 adopt a coiled-coil conformation; that stretch reads TVDVAAERKR…ERITKRLEEL (67 aa).

It belongs to the class-I aminoacyl-tRNA synthetase family. ValS type 1 subfamily. As to quaternary structure, monomer.

The protein localises to the cytoplasm. It catalyses the reaction tRNA(Val) + L-valine + ATP = L-valyl-tRNA(Val) + AMP + diphosphate. Catalyzes the attachment of valine to tRNA(Val). As ValRS can inadvertently accommodate and process structurally similar amino acids such as threonine, to avoid such errors, it has a 'posttransfer' editing activity that hydrolyzes mischarged Thr-tRNA(Val) in a tRNA-dependent manner. In Corynebacterium efficiens (strain DSM 44549 / YS-314 / AJ 12310 / JCM 11189 / NBRC 100395), this protein is Valine--tRNA ligase.